Reading from the N-terminus, the 481-residue chain is MTTALEEQNTQQASVAGRVVRVIGPVVDVEFPRGELPALYNALTVEVTLEAVAKTITLEVAQHLGDNLVRAVSMAPTDGLVRGAVVTDSGKPISVPVGDVVKGHVFNALGDCLDEPGLGRDGEQWGIHRDPPPFDQLEGKTEILETGIKVIDLLTPYVKGGKIGLFGGAGVGKTVLIQEMITRIAREFSGTSVFAGVGERTREGTDLFLEMEEMGVLQDTALVFGQMDEPPGVRMRVALSGLTMAEYFRDVQHQDVLLFIDNIFRFTQAGSEVSTLLGRMPSAVGYQPTLADEMGVLQERITSIKGKSITSLQAVYVPADDYTDPAPATTFAHLDATTELDRAIASKGIYPAVNPLTSTSRILEPGIVGERHYAVAQRVINILQKNKELQDIIAILGMDELSEEDKITVQRARRLERFLGQNFFVAEKFTGIPGSYVPLAHTIDAFERICNGDFDHYPEQAFNGLGGLDDVEAAYKKMTEK.

Residue 167-174 coordinates ATP; the sequence is GGAGVGKT.

The protein belongs to the ATPase alpha/beta chains family. F-type ATPases have 2 components, CF(1) - the catalytic core - and CF(0) - the membrane proton channel. CF(1) has five subunits: alpha(3), beta(3), gamma(1), delta(1), epsilon(1). CF(0) has three main subunits: a(1), b(2) and c(9-12). The alpha and beta chains form an alternating ring which encloses part of the gamma chain. CF(1) is attached to CF(0) by a central stalk formed by the gamma and epsilon chains, while a peripheral stalk is formed by the delta and b chains.

It is found in the cell membrane. The enzyme catalyses ATP + H2O + 4 H(+)(in) = ADP + phosphate + 5 H(+)(out). Functionally, produces ATP from ADP in the presence of a proton gradient across the membrane. The catalytic sites are hosted primarily by the beta subunits. The sequence is that of ATP synthase subunit beta from Corynebacterium diphtheriae (strain ATCC 700971 / NCTC 13129 / Biotype gravis).